A 377-amino-acid chain; its full sequence is Palmitoyltransferase PFA4 (377 aa).

Residues 1–9 are Cytoplasmic-facing; sequence MAIKLKNRW. A helical membrane pass occupies residues 10 to 30; sequence LGVAIPAFLVALIGYGSHYFI. Residues 31 to 122 lie on the Lumenal side of the membrane; the sequence is LSNFLSWNEQ…NCVGHSNFPH (92 aa). Positions 78-128 constitute a DHHC domain; sequence NYCKKCRVYKPERAHHCKTCNQCVLAMDHHCPWTLNCVGHSNFPHFMRFLF. The active-site S-palmitoyl cysteine intermediate is Cys-108. Residues 123 to 143 form a helical membrane-spanning segment; the sequence is FMRFLFWVIFSTAYLLFLLIG. Residues 144–163 are Cytoplasmic-facing; it reads RIYLLWSIRHTAFHHRSTSE. Residues 164-184 traverse the membrane as a helical segment; that stretch reads IIFICIMTPMDAFVLLTVSSL. Over 185 to 377 the chain is Lumenal; that stretch reads LGRCIYNQCL…SDFGVDTELE (193 aa).

The protein belongs to the DHHC palmitoyltransferase family. PFA4 subfamily.

It localises to the endoplasmic reticulum membrane. It catalyses the reaction L-cysteinyl-[protein] + hexadecanoyl-CoA = S-hexadecanoyl-L-cysteinyl-[protein] + CoA. Functionally, mediates the reversible addition of palmitate to target proteins, thereby regulating their membrane association and biological function. The protein is Palmitoyltransferase PFA4 of Kluyveromyces lactis (strain ATCC 8585 / CBS 2359 / DSM 70799 / NBRC 1267 / NRRL Y-1140 / WM37) (Yeast).